We begin with the raw amino-acid sequence, 195 residues long: 7-methyl-GTP pyrophosphatase (195 aa).

The active-site Proton acceptor is Asp-71.

Belongs to the Maf family. YceF subfamily. The cofactor is a divalent metal cation.

It localises to the cytoplasm. The catalysed reaction is N(7)-methyl-GTP + H2O = N(7)-methyl-GMP + diphosphate + H(+). Its function is as follows. Nucleoside triphosphate pyrophosphatase that hydrolyzes 7-methyl-GTP (m(7)GTP). May have a dual role in cell division arrest and in preventing the incorporation of modified nucleotides into cellular nucleic acids. This is 7-methyl-GTP pyrophosphatase from Shewanella oneidensis (strain ATCC 700550 / JCM 31522 / CIP 106686 / LMG 19005 / NCIMB 14063 / MR-1).